A 315-amino-acid polypeptide reads, in one-letter code: Lipoyl synthase (315 aa).

The [4Fe-4S] cluster site is built by cysteine 63, cysteine 68, cysteine 74, cysteine 89, cysteine 93, cysteine 96, and serine 303. Residues 75 to 292 form the Radical SAM core domain; that stretch reads FSKGTATFMI…EEKAYEMGFV (218 aa).

Belongs to the radical SAM superfamily. Lipoyl synthase family. Requires [4Fe-4S] cluster as cofactor.

It is found in the cytoplasm. The catalysed reaction is [[Fe-S] cluster scaffold protein carrying a second [4Fe-4S](2+) cluster] + N(6)-octanoyl-L-lysyl-[protein] + 2 oxidized [2Fe-2S]-[ferredoxin] + 2 S-adenosyl-L-methionine + 4 H(+) = [[Fe-S] cluster scaffold protein] + N(6)-[(R)-dihydrolipoyl]-L-lysyl-[protein] + 4 Fe(3+) + 2 hydrogen sulfide + 2 5'-deoxyadenosine + 2 L-methionine + 2 reduced [2Fe-2S]-[ferredoxin]. It participates in protein modification; protein lipoylation via endogenous pathway; protein N(6)-(lipoyl)lysine from octanoyl-[acyl-carrier-protein]: step 2/2. Functionally, catalyzes the radical-mediated insertion of two sulfur atoms into the C-6 and C-8 positions of the octanoyl moiety bound to the lipoyl domains of lipoate-dependent enzymes, thereby converting the octanoylated domains into lipoylated derivatives. The chain is Lipoyl synthase from Chromobacterium violaceum (strain ATCC 12472 / DSM 30191 / JCM 1249 / CCUG 213 / NBRC 12614 / NCIMB 9131 / NCTC 9757 / MK).